The primary structure comprises 115 residues: Nucleoid-associated protein Ava_2322 (115 aa).

This sequence belongs to the YbaB/EbfC family. As to quaternary structure, homodimer.

It is found in the cytoplasm. It localises to the nucleoid. Functionally, binds to DNA and alters its conformation. May be involved in regulation of gene expression, nucleoid organization and DNA protection. The sequence is that of Nucleoid-associated protein Ava_2322 from Trichormus variabilis (strain ATCC 29413 / PCC 7937) (Anabaena variabilis).